The sequence spans 149 residues: Small ribosomal subunit protein bS6 (149 aa).

The tract at residues 93 to 149 (VGKHEEGPSAMMQKRDRDDRPRRDGDRPDRGGFGDRGPRPDRGDRDDRPRRPREDRA) is disordered. Residues 94-149 (GKHEEGPSAMMQKRDRDDRPRRDGDRPDRGGFGDRGPRPDRGDRDDRPRRPREDRA) show a composition bias toward basic and acidic residues.

The protein belongs to the bacterial ribosomal protein bS6 family.

Binds together with bS18 to 16S ribosomal RNA. This Rhizobium meliloti (strain 1021) (Ensifer meliloti) protein is Small ribosomal subunit protein bS6.